The sequence spans 255 residues: Large ribosomal subunit protein uL4 (255 aa).

This sequence belongs to the universal ribosomal protein uL4 family. Part of the 50S ribosomal subunit.

In terms of biological role, one of the primary rRNA binding proteins, this protein initially binds near the 5'-end of the 23S rRNA. It is important during the early stages of 50S assembly. It makes multiple contacts with different domains of the 23S rRNA in the assembled 50S subunit and ribosome. Functionally, forms part of the polypeptide exit tunnel. The polypeptide is Large ribosomal subunit protein uL4 (Thermococcus kodakarensis (strain ATCC BAA-918 / JCM 12380 / KOD1) (Pyrococcus kodakaraensis (strain KOD1))).